Consider the following 69-residue polypeptide: uncharacterized protein (69 aa).

This is an uncharacterized protein from Sinorhizobium fredii (strain NBRC 101917 / NGR234).